The primary structure comprises 187 residues: Large ribosomal subunit protein uL22 (187 aa).

The interval 155–187 (DAVSRAAPTDDAPAKKKLSKKKLARQKEKMMRE) is disordered. The segment covering 169–178 (KKKLSKKKLA) has biased composition (basic residues).

Belongs to the universal ribosomal protein uL22 family.

The chain is Large ribosomal subunit protein uL22 (RpL17) from Lonomia obliqua (Moth).